We begin with the raw amino-acid sequence, 411 residues long: Alpha-1-antitrypsin 1-6 (411 aa).

Residues 1–25 (MTTPFSSHGLLLLVGLCCLLLITKT) form the signal peptide. Asn50, Asn89, Asn101, and Asn164 each carry an N-linked (GlcNAc...) asparagine glycan.

The protein belongs to the serpin family. As to expression, expressed predominantly in epididymis where it is found in the epithelial cells of the caput, corpus and cauda epididymis.

The protein localises to the secreted. Inhibitor of serine proteases. In Mus musculus (Mouse), this protein is Alpha-1-antitrypsin 1-6.